Here is a 248-residue protein sequence, read N- to C-terminus: Ubiquinone/menaquinone biosynthesis C-methyltransferase UbiE (248 aa).

Residues S68, D92, and 120–121 (NA) each bind S-adenosyl-L-methionine.

The protein belongs to the class I-like SAM-binding methyltransferase superfamily. MenG/UbiE family.

It catalyses the reaction a 2-demethylmenaquinol + S-adenosyl-L-methionine = a menaquinol + S-adenosyl-L-homocysteine + H(+). The catalysed reaction is a 2-methoxy-6-(all-trans-polyprenyl)benzene-1,4-diol + S-adenosyl-L-methionine = a 5-methoxy-2-methyl-3-(all-trans-polyprenyl)benzene-1,4-diol + S-adenosyl-L-homocysteine + H(+). Its pathway is quinol/quinone metabolism; menaquinone biosynthesis; menaquinol from 1,4-dihydroxy-2-naphthoate: step 2/2. It participates in cofactor biosynthesis; ubiquinone biosynthesis. In terms of biological role, methyltransferase required for the conversion of demethylmenaquinol (DMKH2) to menaquinol (MKH2) and the conversion of 2-polyprenyl-6-methoxy-1,4-benzoquinol (DDMQH2) to 2-polyprenyl-3-methyl-6-methoxy-1,4-benzoquinol (DMQH2). The polypeptide is Ubiquinone/menaquinone biosynthesis C-methyltransferase UbiE (Rickettsia prowazekii (strain Madrid E)).